Reading from the N-terminus, the 128-residue chain is Translation initiation factor 5A (128 aa).

Lysine 35 carries the post-translational modification Hypusine.

The protein belongs to the eIF-5A family.

It localises to the cytoplasm. Its function is as follows. Functions by promoting the formation of the first peptide bond. The sequence is that of Translation initiation factor 5A (eIF5A) from Methanocella arvoryzae (strain DSM 22066 / NBRC 105507 / MRE50).